A 608-amino-acid chain; its full sequence is Rap1 GTPase-GDP dissociation stimulator 1 (608 aa).

ARM repeat units follow at residues 89-131 (GLIS…DQAG) and 171-212 (DSLQ…NLAE). The segment at 122–171 (EGRSAVDQAGGAQIVVDHLRSLCSKTDPASEKLLTVFCGMLMNYSNEKND) is prevents binding to prenylated RHOA. K231 carries the N6-acetyllysine modification. ARM repeat units follow at residues 348–391 (DGNC…NLAI), 392–432 (PVVN…MLID), and 480–520 (SKDV…LIAA).

Interacts with RABL3. Interacts with RHOT1. As to quaternary structure, interacts with unprenylated RHOA; the interaction is direct. Interacts with RAP1A. Interacts with KRAS. Interacts with RAC1. Interacts with RAP1B. Preferentially interacts with unprenylated GTPases that will become geranylgeranylated. May also interact with prenylated GTPases. In terms of assembly, interacts with prenylated RHOA; the interaction is direct and in a 1:1 stoichiometry. Interacts with RAP1A. Interacts with KRAS. Interacts with RAC1. Interacts with RAP1B. Preferentially interacts with prenylated GTPases. Post-translationally, the N-terminus is blocked. In terms of processing, forms covalent cross-links mediated by transglutaminase TGM2, between a glutamine and the epsilon-amino group of a lysine residue, forming homopolymers and heteropolymers. As to expression, brain.

Its subcellular location is the cytoplasm. The protein localises to the cytosol. It localises to the endoplasmic reticulum. The protein resides in the mitochondrion. It is found in the nucleus. Its function is as follows. Acts as a GEF (guanine nucleotide exchange factor) for the Rho family of small GTP-binding proteins (G proteins) that stimulates the dissociation of GDP to enable subsequent binding of GTP. Additionally, appears to chaperone the processing and/or trafficking of small GTPases containing a C-terminal polybasic region independently of GEF activity. Targets include RAP1A/RAP1B, RHOA, RHOB, RHOC, RAC1 and KRAS. Regulates mitochondrial dynamics by controlling RHOT function to promote mitochondrial fission during high calcium conditions. Able to promote the Ca(2+) release from the endoplasmic reticulum via both inositol trisphosphate (Ins3P) and ryanodine sensitive receptors leading to a enhanced mitochondrial Ca(2+) uptake. Acts as a GEF (guanine nucleotide exchange factor) for unprenylated RHOA. Chaperones the entry and passage of small GTPases through the prenylation pathway. Recognizes the last amino acid in the GTPase C-terminal CAAX motif with a preference for 'Leu' over 'Met', indicating involvement in the geranylgeranylation pathway. May also recognize prenylated GTPases. In terms of biological role, acts as a GEF (guanine nucleotide exchange factor) for prenylated RHOA. Acts as a GEF for RHOC. Chaperones the downstream trafficking and/or processing of small newly prenylated GTPases. Escorts RAC1 to the nucleus. This Bos taurus (Bovine) protein is Rap1 GTPase-GDP dissociation stimulator 1 (RAP1GDS1).